Consider the following 329-residue polypeptide: DNA-directed RNA polymerase subunit alpha (329 aa).

An alpha N-terminal domain (alpha-NTD) region spans residues 1–231 (MQNSLLKPKA…EQLAVFAQLE (231 aa)). Positions 249 to 329 (FDPILLRPVD…SWPPAALEKR (81 aa)) are alpha C-terminal domain (alpha-CTD).

The protein belongs to the RNA polymerase alpha chain family. In terms of assembly, homodimer. The RNAP catalytic core consists of 2 alpha, 1 beta, 1 beta' and 1 omega subunit. When a sigma factor is associated with the core the holoenzyme is formed, which can initiate transcription.

The enzyme catalyses RNA(n) + a ribonucleoside 5'-triphosphate = RNA(n+1) + diphosphate. Its function is as follows. DNA-dependent RNA polymerase catalyzes the transcription of DNA into RNA using the four ribonucleoside triphosphates as substrates. In Albidiferax ferrireducens (strain ATCC BAA-621 / DSM 15236 / T118) (Rhodoferax ferrireducens), this protein is DNA-directed RNA polymerase subunit alpha.